A 582-amino-acid chain; its full sequence is Hemagglutinin-neuraminidase (582 aa).

The chain crosses the membrane as a helical span at residues 35 to 55; it reads ILVLSVQAVTLILVIVTLGEL. Intrachain disulfides connect Cys-178–Cys-202, Cys-192–Cys-253, and Cys-244–Cys-257. Asn-284 and Asn-329 each carry an N-linked (GlcNAc...) asparagine; by host glycan. Cystine bridges form between Cys-350/Cys-471, Cys-382/Cys-392, and Cys-465/Cys-475. Residues Asn-400 and Asn-448 are each glycosylated (N-linked (GlcNAc...) asparagine; by host). An N-linked (GlcNAc...) asparagine; by host glycan is attached at Asn-507. A disulfide bond links Cys-545 and Cys-556.

It belongs to the paramyxoviruses hemagglutinin-neuraminidase family. As to quaternary structure, homodimer. Further forms homotetramer (dimer of dimers). Interacts with F protein trimer.

The protein localises to the virion membrane. It localises to the host cell membrane. The enzyme catalyses Hydrolysis of alpha-(2-&gt;3)-, alpha-(2-&gt;6)-, alpha-(2-&gt;8)- glycosidic linkages of terminal sialic acid residues in oligosaccharides, glycoproteins, glycolipids, colominic acid and synthetic substrates.. In terms of biological role, attaches the virus to alpha-2,3-linked sialic acid-containing cell receptors and thereby initiating infection. Binding of HN protein to the receptor induces a conformational change that allows the F protein to trigger virion/cell membranes fusion. Binds to the glycan motifs sialyl Lewis (SLe) and GM2 ganglioside (GM2-glycan). Functionally, neuraminidase activity ensures the efficient spread of the virus by dissociating the mature virions from the neuraminic acid containing glycoproteins. The sequence is that of Hemagglutinin-neuraminidase (HN) from Homo sapiens (Human).